The sequence spans 51 residues: Large ribosomal subunit protein eL39 (51 aa).

The interval 32–51 (KGSVKQHPKMRHWRRKNLKK) is disordered. A compositionally biased stretch (basic residues) spans 33–51 (GSVKQHPKMRHWRRKNLKK).

The protein belongs to the eukaryotic ribosomal protein eL39 family.

The chain is Large ribosomal subunit protein eL39 from Methanococcus maripaludis (strain C5 / ATCC BAA-1333).